Consider the following 443-residue polypeptide: ATP-dependent protease ATPase subunit HslU (443 aa).

Residues Ile18 and 60 to 65 contribute to the ATP site; that span reads GVGKTE. The segment at 138-158 is disordered; sequence PAENQWGEKEQNEDKGTRQTF. Positions 143-154 are enriched in basic and acidic residues; sequence WGEKEQNEDKGT. 3 residues coordinate ATP: Asp255, Glu321, and Arg393.

This sequence belongs to the ClpX chaperone family. HslU subfamily. As to quaternary structure, a double ring-shaped homohexamer of HslV is capped on each side by a ring-shaped HslU homohexamer. The assembly of the HslU/HslV complex is dependent on binding of ATP.

The protein resides in the cytoplasm. In terms of biological role, ATPase subunit of a proteasome-like degradation complex; this subunit has chaperone activity. The binding of ATP and its subsequent hydrolysis by HslU are essential for unfolding of protein substrates subsequently hydrolyzed by HslV. HslU recognizes the N-terminal part of its protein substrates and unfolds these before they are guided to HslV for hydrolysis. This chain is ATP-dependent protease ATPase subunit HslU, found in Pseudoalteromonas atlantica (strain T6c / ATCC BAA-1087).